The following is a 190-amino-acid chain: dTTP/UTP pyrophosphatase (190 aa).

Residue Asp-67 is the Proton acceptor of the active site.

The protein belongs to the Maf family. YhdE subfamily. Requires a divalent metal cation as cofactor.

It localises to the cytoplasm. The catalysed reaction is dTTP + H2O = dTMP + diphosphate + H(+). It carries out the reaction UTP + H2O = UMP + diphosphate + H(+). In terms of biological role, nucleoside triphosphate pyrophosphatase that hydrolyzes dTTP and UTP. May have a dual role in cell division arrest and in preventing the incorporation of modified nucleotides into cellular nucleic acids. The chain is dTTP/UTP pyrophosphatase from Aquifex aeolicus (strain VF5).